The sequence spans 190 residues: MIHADHDDNLPDDEEGLPLPPSKSQRKRDMHALQDLGEQLVALSVDQLKKVPMPEALADAVREAKRMTKHEARRRQMQYVGKLMRHIDPEPIQAQLDVFNGLSKAEIARQHRLERLRSEVLDDEKVLQRIVETWPEADFQQLRTLRRNALKEREQNKPPRAFRELFRVLRDLDVGAAAPPADEPRDDDEE.

The segment at 1–31 (MIHADHDDNLPDDEEGLPLPPSKSQRKRDMH) is disordered.

Belongs to the DarP family.

Its subcellular location is the cytoplasm. Functionally, member of a network of 50S ribosomal subunit biogenesis factors which assembles along the 30S-50S interface, preventing incorrect 23S rRNA structures from forming. Promotes peptidyl transferase center (PTC) maturation. This is Dual-action ribosomal maturation protein DarP from Aromatoleum aromaticum (strain DSM 19018 / LMG 30748 / EbN1) (Azoarcus sp. (strain EbN1)).